A 1701-amino-acid polypeptide reads, in one-letter code: DDB1- and CUL4-associated factor homolog 1 (1701 aa).

A compositionally biased stretch (polar residues) spans 224-245 (HAEQSTSNGTSIPSIKITSVDG). Disordered regions lie at residues 224 to 269 (HAEQ…RRTE), 883 to 906 (DRPASRSINTPILNKPLPSSGNNF), and 932 to 961 (RPSNAASLSSPAMATRSHSTDDDVFATPTL). The region spanning 851–883 (NQAELLQLIHDHLLKSKLDSVAAMLKSEAKLPD) is the LisH domain. The segment covering 888 to 906 (RSINTPILNKPLPSSGNNF) has biased composition (polar residues). WD repeat units lie at residues 1086–1125 (DHDESYTKATFSVDDEHLIVGLFNGEVHWINVDTGLDEGH), 1128–1169 (CHGS…QRVH), 1171–1210 (YREDSCVKFANTTMQRIVGTCRDKATVYDTETNHVLDTYL), and 1215–1252 (GLQYEKNYASFSPDDKLIFNDGLLWDVRKKNSAIHVFD). 2 consecutive short sequence motifs (DWD box) follow at residues 1237 to 1245 (LLWDVRKKN) and 1275 to 1282 (EVYDIRTF). 3 disordered regions span residues 1384–1559 (IGRL…DINL), 1566–1585 (EARVVENEGNNERPARPVDP), and 1641–1701 (LVRG…DDEA). Acidic residues-rich tracts occupy residues 1390–1423 (NEDENDEEEDEQREDHDEDEDSDESGDGDDDEEI) and 1451–1461 (DDNDTLDDLDF). Residues 1468–1479 (IIRRQAQRRRQR) are compositionally biased toward basic residues. 2 stretches are compositionally biased toward acidic residues: residues 1494 to 1512 (EGSDEDGDDDEDGEGDPDF) and 1520 to 1543 (DLVDAVDEEVDEDELGTDGDDDDS). The span at 1567–1581 (ARVVENEGNNERPAR) shows a compositional bias: basic and acidic residues. Residues 1667-1678 (DTDEYQSEEEEI) show a composition bias toward acidic residues.

It belongs to the VPRBP/DCAF1 family. As to quaternary structure, component of the cul4-rbx1-ddb1-dcaf1 E3 ubiquitin-protein ligase complex.

It is found in the nucleus. The protein operates within protein modification; protein ubiquitination. In terms of biological role, component of the cul4-rbx1-ddb1-dcaf1 E3 ubiquitin-protein ligase complex, dcaf1 may function as the substrate recognition module within this complex. This chain is DDB1- and CUL4-associated factor homolog 1 (dcaf-1), found in Caenorhabditis elegans.